A 370-amino-acid chain; its full sequence is Queuine tRNA-ribosyltransferase (370 aa).

Residue aspartate 93 is the Proton acceptor of the active site. Residues 93–97, aspartate 147, glutamine 189, and glycine 216 contribute to the substrate site; that span reads DSGGF. Residues 247-253 are RNA binding; that stretch reads GVGSPDC. Aspartate 266 acts as the Nucleophile in catalysis. An RNA binding; important for wobble base 34 recognition region spans residues 271 to 275; that stretch reads TRIAR. Positions 304, 306, 309, and 335 each coordinate Zn(2+).

The protein belongs to the queuine tRNA-ribosyltransferase family. Homodimer. Within each dimer, one monomer is responsible for RNA recognition and catalysis, while the other monomer binds to the replacement base PreQ1. The cofactor is Zn(2+).

It catalyses the reaction 7-aminomethyl-7-carbaguanine + guanosine(34) in tRNA = 7-aminomethyl-7-carbaguanosine(34) in tRNA + guanine. It participates in tRNA modification; tRNA-queuosine biosynthesis. Catalyzes the base-exchange of a guanine (G) residue with the queuine precursor 7-aminomethyl-7-deazaguanine (PreQ1) at position 34 (anticodon wobble position) in tRNAs with GU(N) anticodons (tRNA-Asp, -Asn, -His and -Tyr). Catalysis occurs through a double-displacement mechanism. The nucleophile active site attacks the C1' of nucleotide 34 to detach the guanine base from the RNA, forming a covalent enzyme-RNA intermediate. The proton acceptor active site deprotonates the incoming PreQ1, allowing a nucleophilic attack on the C1' of the ribose to form the product. After dissociation, two additional enzymatic reactions on the tRNA convert PreQ1 to queuine (Q), resulting in the hypermodified nucleoside queuosine (7-(((4,5-cis-dihydroxy-2-cyclopenten-1-yl)amino)methyl)-7-deazaguanosine). The polypeptide is Queuine tRNA-ribosyltransferase (Desulforamulus reducens (strain ATCC BAA-1160 / DSM 100696 / MI-1) (Desulfotomaculum reducens)).